We begin with the raw amino-acid sequence, 359 residues long: Peptide chain release factor 1 (359 aa).

Position 235 is an N5-methylglutamine (Q235). The span at R282–R307 shows a compositional bias: basic and acidic residues. The segment at R282–Y309 is disordered.

The protein belongs to the prokaryotic/mitochondrial release factor family. Methylated by PrmC. Methylation increases the termination efficiency of RF1.

The protein localises to the cytoplasm. Its function is as follows. Peptide chain release factor 1 directs the termination of translation in response to the peptide chain termination codons UAG and UAA. The sequence is that of Peptide chain release factor 1 from Allorhizobium ampelinum (strain ATCC BAA-846 / DSM 112012 / S4) (Agrobacterium vitis (strain S4)).